The following is a 334-amino-acid chain: L-lactate dehydrogenase B-B chain (334 aa).

NAD(+) contacts are provided by residues 30-58 (GQVG…VEDK) and Arg100. The substrate site is built by Arg107, Asn139, and Arg170. NAD(+) is bound at residue Asn139. His194 (proton acceptor) is an active-site residue. Thr249 serves as a coordination point for substrate.

This sequence belongs to the LDH/MDH superfamily. LDH family. In terms of assembly, homotetramer.

The protein localises to the cytoplasm. It catalyses the reaction (S)-lactate + NAD(+) = pyruvate + NADH + H(+). Its pathway is fermentation; pyruvate fermentation to lactate; (S)-lactate from pyruvate: step 1/1. This is L-lactate dehydrogenase B-B chain from Danio rerio (Zebrafish).